The chain runs to 387 residues: Putative ankyrin repeat protein RBE_0984 (387 aa).

5 ANK repeats span residues 50 to 79, 88 to 119, 123 to 154, 159 to 188, and 210 to 239; these read YGNT…DKDI, HRET…AINV, RKHT…VINV, HKDS…KENI, and VCKM…LKGE. 2 coiled-coil regions span residues 251-278 and 311-352; these read FEDI…KKCE and SISA…ALEK.

The protein is Putative ankyrin repeat protein RBE_0984 of Rickettsia bellii (strain RML369-C).